Reading from the N-terminus, the 415-residue chain is Light-independent protochlorophyllide reductase subunit N (415 aa).

[4Fe-4S] cluster contacts are provided by Cys16, Cys41, and Cys98.

It belongs to the BchN/ChlN family. Protochlorophyllide reductase is composed of three subunits; BchL, BchN and BchB. Forms a heterotetramer of two BchB and two BchN subunits. It depends on [4Fe-4S] cluster as a cofactor.

It carries out the reaction chlorophyllide a + oxidized 2[4Fe-4S]-[ferredoxin] + 2 ADP + 2 phosphate = protochlorophyllide a + reduced 2[4Fe-4S]-[ferredoxin] + 2 ATP + 2 H2O. The protein operates within porphyrin-containing compound metabolism; bacteriochlorophyll biosynthesis (light-independent). Functionally, component of the dark-operative protochlorophyllide reductase (DPOR) that uses Mg-ATP and reduced ferredoxin to reduce ring D of protochlorophyllide (Pchlide) to form chlorophyllide a (Chlide). This reaction is light-independent. The NB-protein (BchN-BchB) is the catalytic component of the complex. The chain is Light-independent protochlorophyllide reductase subunit N from Roseiflexus sp. (strain RS-1).